The sequence spans 205 residues: Glycerol-3-phosphate acyltransferase (205 aa).

5 helical membrane-spanning segments follow: residues 4–24 (IAPG…AILV), 80–100 (PFWL…PVFF), 107–127 (GVAT…GVMA), 130–150 (WLLT…SALI), and 155–175 (VWWF…LILL).

This sequence belongs to the PlsY family. In terms of assembly, probably interacts with PlsX.

It is found in the cell inner membrane. It carries out the reaction an acyl phosphate + sn-glycerol 3-phosphate = a 1-acyl-sn-glycero-3-phosphate + phosphate. Its pathway is lipid metabolism; phospholipid metabolism. Functionally, catalyzes the transfer of an acyl group from acyl-phosphate (acyl-PO(4)) to glycerol-3-phosphate (G3P) to form lysophosphatidic acid (LPA). This enzyme utilizes acyl-phosphate as fatty acyl donor, but not acyl-CoA or acyl-ACP. The sequence is that of Glycerol-3-phosphate acyltransferase from Klebsiella pneumoniae (strain 342).